The primary structure comprises 166 residues: NAD(P)H-quinone oxidoreductase subunit I, chloroplastic (166 aa).

4Fe-4S ferredoxin-type domains are found at residues 55–84 (GRIH…VDWK) and 95–124 (LNYS…MTEE). 8 residues coordinate [4Fe-4S] cluster: cysteine 64, cysteine 67, cysteine 70, cysteine 74, cysteine 104, cysteine 107, cysteine 110, and cysteine 114.

It belongs to the complex I 23 kDa subunit family. In terms of assembly, NDH is composed of at least 16 different subunits, 5 of which are encoded in the nucleus. [4Fe-4S] cluster serves as cofactor.

It is found in the plastid. Its subcellular location is the chloroplast thylakoid membrane. The catalysed reaction is a plastoquinone + NADH + (n+1) H(+)(in) = a plastoquinol + NAD(+) + n H(+)(out). It catalyses the reaction a plastoquinone + NADPH + (n+1) H(+)(in) = a plastoquinol + NADP(+) + n H(+)(out). Functionally, NDH shuttles electrons from NAD(P)H:plastoquinone, via FMN and iron-sulfur (Fe-S) centers, to quinones in the photosynthetic chain and possibly in a chloroplast respiratory chain. The immediate electron acceptor for the enzyme in this species is believed to be plastoquinone. Couples the redox reaction to proton translocation, and thus conserves the redox energy in a proton gradient. The polypeptide is NAD(P)H-quinone oxidoreductase subunit I, chloroplastic (Hofmeisteria fasciculata (Helogyne fasciculata)).